Here is a 316-residue protein sequence, read N- to C-terminus: Cytochrome c biogenesis protein CcsA (316 aa).

8 helical membrane passes run valine 19–tryptophan 39, serine 47–phenylalanine 67, isoleucine 77–leucine 97, leucine 106–leucine 126, valine 151–leucine 171, threonine 224–asparagine 244, threonine 258–leucine 275, and alanine 285–leucine 305.

The protein belongs to the CcmF/CycK/Ccl1/NrfE/CcsA family. As to quaternary structure, may interact with ccs1.

It localises to the cellular thylakoid membrane. Its function is as follows. Required during biogenesis of c-type cytochromes (cytochrome c6 and cytochrome f) at the step of heme attachment. The chain is Cytochrome c biogenesis protein CcsA from Prochlorococcus marinus (strain SARG / CCMP1375 / SS120).